Consider the following 234-residue polypeptide: Leucyl/phenylalanyl-tRNA--protein transferase (234 aa).

This sequence belongs to the L/F-transferase family.

The protein resides in the cytoplasm. It carries out the reaction N-terminal L-lysyl-[protein] + L-leucyl-tRNA(Leu) = N-terminal L-leucyl-L-lysyl-[protein] + tRNA(Leu) + H(+). It catalyses the reaction N-terminal L-arginyl-[protein] + L-leucyl-tRNA(Leu) = N-terminal L-leucyl-L-arginyl-[protein] + tRNA(Leu) + H(+). The enzyme catalyses L-phenylalanyl-tRNA(Phe) + an N-terminal L-alpha-aminoacyl-[protein] = an N-terminal L-phenylalanyl-L-alpha-aminoacyl-[protein] + tRNA(Phe). Functions in the N-end rule pathway of protein degradation where it conjugates Leu, Phe and, less efficiently, Met from aminoacyl-tRNAs to the N-termini of proteins containing an N-terminal arginine or lysine. In Citrobacter koseri (strain ATCC BAA-895 / CDC 4225-83 / SGSC4696), this protein is Leucyl/phenylalanyl-tRNA--protein transferase.